The chain runs to 69 residues: Putative membrane protein insertion efficiency factor (69 aa).

It belongs to the UPF0161 family.

Its subcellular location is the cell membrane. Functionally, could be involved in insertion of integral membrane proteins into the membrane. This Clostridium kluyveri (strain NBRC 12016) protein is Putative membrane protein insertion efficiency factor.